Reading from the N-terminus, the 132-residue chain is MKRTALLHAELSQVIAALGHGDMLVIGDAGLPIPDGPRRIDLALTPGIPRVADVLKVVLSEMQVERALIAREAIGQLPVGQLPAWCEGQLAALPETVSHEELKRLSARAKAVIRTGECTPYANIVLYAGVTF.

His-20 acts as the Proton donor in catalysis. Residues Asp-28, His-99, and 121–123 (YAN) contribute to the substrate site.

The protein belongs to the RbsD / FucU family. RbsD subfamily. As to quaternary structure, homodecamer.

It localises to the cytoplasm. It carries out the reaction beta-D-ribopyranose = beta-D-ribofuranose. It participates in carbohydrate metabolism; D-ribose degradation; D-ribose 5-phosphate from beta-D-ribopyranose: step 1/2. Its function is as follows. Catalyzes the interconversion of beta-pyran and beta-furan forms of D-ribose. This is D-ribose pyranase from Variovorax paradoxus (strain S110).